The sequence spans 251 residues: MNLNSIPAFQDNYIWVLTNDEGRCVIVDPGEAAPVLKAIAEHKWMPEAIFLTHHHHDHVGGVKELLQHFPQMTVYGPAETQDKGATHLVGDGDTIRVLGEKFTLFATPGHTLGHVFYFSHPYLFCGDTLFSGGCGRLFEGTPSQMYQSLMKINSLPDDTLICCAHEYTLANIKFALSILPHDSFINEYYRKVKELRVKKQMTLPVILKNERKINLFLRTENIDLINEINKETILQQPEARFAWLRSKKDTF.

Zn(2+) contacts are provided by His-53, His-55, Asp-57, His-58, His-110, Asp-127, and His-165.

The protein belongs to the metallo-beta-lactamase superfamily. Glyoxalase II family. As to quaternary structure, monomer. Zn(2+) is required as a cofactor.

The catalysed reaction is an S-(2-hydroxyacyl)glutathione + H2O = a 2-hydroxy carboxylate + glutathione + H(+). It participates in secondary metabolite metabolism; methylglyoxal degradation; (R)-lactate from methylglyoxal: step 2/2. Its function is as follows. Thiolesterase that catalyzes the hydrolysis of S-D-lactoyl-glutathione to form glutathione and D-lactic acid. The polypeptide is Hydroxyacylglutathione hydrolase (Salmonella paratyphi C (strain RKS4594)).